Consider the following 378-residue polypeptide: Chorismate synthase (378 aa).

Residues Arg48 and Arg54 each contribute to the NADP(+) site. Residues 125-127 (RSS), 238-239 (NA), Gly278, 293-297 (KPTSS), and Arg319 each bind FMN.

This sequence belongs to the chorismate synthase family. As to quaternary structure, homotetramer. The cofactor is FMNH2.

It catalyses the reaction 5-O-(1-carboxyvinyl)-3-phosphoshikimate = chorismate + phosphate. The protein operates within metabolic intermediate biosynthesis; chorismate biosynthesis; chorismate from D-erythrose 4-phosphate and phosphoenolpyruvate: step 7/7. In terms of biological role, catalyzes the anti-1,4-elimination of the C-3 phosphate and the C-6 proR hydrogen from 5-enolpyruvylshikimate-3-phosphate (EPSP) to yield chorismate, which is the branch point compound that serves as the starting substrate for the three terminal pathways of aromatic amino acid biosynthesis. This reaction introduces a second double bond into the aromatic ring system. In Azoarcus sp. (strain BH72), this protein is Chorismate synthase.